Here is a 501-residue protein sequence, read N- to C-terminus: ATP synthase subunit alpha (501 aa).

An ATP-binding site is contributed by 169 to 176; the sequence is GDRQTGKT.

This sequence belongs to the ATPase alpha/beta chains family. F-type ATPases have 2 components, CF(1) - the catalytic core - and CF(0) - the membrane proton channel. CF(1) has five subunits: alpha(3), beta(3), gamma(1), delta(1), epsilon(1). CF(0) has three main subunits: a(1), b(2) and c(9-12). The alpha and beta chains form an alternating ring which encloses part of the gamma chain. CF(1) is attached to CF(0) by a central stalk formed by the gamma and epsilon chains, while a peripheral stalk is formed by the delta and b chains.

The protein resides in the cell membrane. The enzyme catalyses ATP + H2O + 4 H(+)(in) = ADP + phosphate + 5 H(+)(out). Its function is as follows. Produces ATP from ADP in the presence of a proton gradient across the membrane. The alpha chain is a regulatory subunit. This is ATP synthase subunit alpha from Streptococcus thermophilus (strain CNRZ 1066).